The sequence spans 459 residues: ATP-dependent 6-phosphofructokinase (459 aa).

ATP contacts are provided by residues Gly-89, 154-155 (RG), and 179-182 (GDGG). Asp-180 provides a ligand contact to Mg(2+). Substrate-binding positions include 208 to 210 (TID), 253 to 255 (MGR), Glu-309, and 368 to 371 (YAIR). Asp-210 serves as the catalytic Proton acceptor.

It belongs to the phosphofructokinase type A (PFKA) family. PPi-dependent PFK group II subfamily. Atypical ATP-dependent clade 'X' sub-subfamily. Homodimer. Requires Mg(2+) as cofactor.

The protein resides in the cytoplasm. It catalyses the reaction beta-D-fructose 6-phosphate + ATP = beta-D-fructose 1,6-bisphosphate + ADP + H(+). The protein operates within carbohydrate degradation; glycolysis; D-glyceraldehyde 3-phosphate and glycerone phosphate from D-glucose: step 3/4. AMP causes 20-40% inhibition and diphosphate causes 20-50% inhibition. ADP, citrate, PEP and FBP have no effect. In terms of biological role, catalyzes the phosphorylation of D-fructose 6-phosphate to fructose 1,6-bisphosphate by ATP, the first committing step of glycolysis. This chain is ATP-dependent 6-phosphofructokinase, found in Amycolatopsis methanolica.